The sequence spans 365 residues: Serine/threonine-protein kinase SAPK6 (365 aa).

Positions 4 to 260 constitute a Protein kinase domain; sequence YELLKDIGSG…IREIRNHPWF (257 aa). Residues 10 to 18 and Lys33 each bind ATP; that span reads IGSGNFGVA. The Proton acceptor role is filled by Asp123. Residues 298 to 365 form a disordered region; the sequence is VQEAKTPPPS…AHASCDLQKS (68 aa). The segment covering 317–347 has biased composition (acidic residues); sequence TEEEEQEDGKNPDDDEGDRDEEEGEEGDSED.

The protein belongs to the protein kinase superfamily. Ser/Thr protein kinase family. In terms of assembly, interacts with BZIP46. In terms of processing, may be phosphorylated. Expressed in leaf blades and leaf sheaths. Expressed in shoots and roots of young seedlings.

The catalysed reaction is L-seryl-[protein] + ATP = O-phospho-L-seryl-[protein] + ADP + H(+). It catalyses the reaction L-threonyl-[protein] + ATP = O-phospho-L-threonyl-[protein] + ADP + H(+). With respect to regulation, activated by hyperosmotic stress. Its function is as follows. May play a role in signal transduction of hyperosmotic response. Can phosphorylate ABI5 in vitro. Can phosphorylate BZIP46 in vitro. This chain is Serine/threonine-protein kinase SAPK6, found in Oryza sativa subsp. japonica (Rice).